Consider the following 215-residue polypeptide: MTTVAVNAPLPPPLVELCNRRPIPTPRIISLQRQLISTPVVKNYQADVQEAINDFKRLNITPGHLGEVIDTMGQQGKLLPEIIEADDDFKVNQTRNLSCKTVEYLNFLENDKLFRCRLCYTHADWLWCDFHRNHAYRGTRDITCNNYVEHLNSDMGVVMLIEEYFYCLSSCNFKQDAKRALQTLTKFESLSDLMASYNFSTPDLDTNAYELMDFE.

As to quaternary structure, interacts with host proteins P40, P34 ands P20.

It is found in the host nucleus. Functionally, plays a role in the translocation of the P40 subunit of host Arp2/3 to the nucleus. The robust nuclear accumulation of Arp2/3 induces nuclear actin polymerization to assist in virus replication. Mechanistically, subverts the host CRM1-dependent nuclear export pathway leading to Arp2/3 acumulation in the host nucleus. The chain is Protein Ac34 (Ac34) from Autographa californica nuclear polyhedrosis virus (AcMNPV).